We begin with the raw amino-acid sequence, 245 residues long: 1-(5-phosphoribosyl)-5-[(5-phosphoribosylamino)methylideneamino] imidazole-4-carboxamide isomerase (245 aa).

The active-site Proton acceptor is the D7. D129 acts as the Proton donor in catalysis.

It belongs to the HisA/HisF family.

The protein localises to the cytoplasm. The catalysed reaction is 1-(5-phospho-beta-D-ribosyl)-5-[(5-phospho-beta-D-ribosylamino)methylideneamino]imidazole-4-carboxamide = 5-[(5-phospho-1-deoxy-D-ribulos-1-ylimino)methylamino]-1-(5-phospho-beta-D-ribosyl)imidazole-4-carboxamide. It participates in amino-acid biosynthesis; L-histidine biosynthesis; L-histidine from 5-phospho-alpha-D-ribose 1-diphosphate: step 4/9. In Idiomarina loihiensis (strain ATCC BAA-735 / DSM 15497 / L2-TR), this protein is 1-(5-phosphoribosyl)-5-[(5-phosphoribosylamino)methylideneamino] imidazole-4-carboxamide isomerase.